The following is a 203-amino-acid chain: Probable GTP-binding protein EngB (203 aa).

One can recognise an EngB-type G domain in the interval 24 to 199; that stretch reads DGSEVAFAGR…HTVIETWLGL (176 aa). Residues 32-39, 59-63, 77-80, 144-147, and 178-180 each bind GTP; these read GRSNAGKS, GRTQQ, DLPG, TKAD, and FSS. 2 residues coordinate Mg(2+): Ser-39 and Thr-61.

Belongs to the TRAFAC class TrmE-Era-EngA-EngB-Septin-like GTPase superfamily. EngB GTPase family. Mg(2+) serves as cofactor.

Its function is as follows. Necessary for normal cell division and for the maintenance of normal septation. The sequence is that of Probable GTP-binding protein EngB from Xylella fastidiosa (strain 9a5c).